A 515-amino-acid chain; its full sequence is MNDQLTEVYASIDALIDYALAHLDLDPRNADWTRNQIFALFRLDSYPGPKTTTSAASVSDVVQDIVGSRSQAPYGEKTPDPLLAAFRAAATTAGLFKPEEGPAYADTIMGILSANPADLDDRFLLVEHRDGGMAAMQWFYDYCVANNYVKRAQLDRNPRFDSHGLTVTINLAKPEFKNMKKAAAGNAVAGGYPKCTICHENEGFAGRDKRTLRTLPVTLGGESWFWQFSPYGYFDQHGICVNTDHTPMHVDRDTFGHLLDFVDRFPGYFLGCNAALPRIGGSVLAHDHYQGGGELLPMHKAATWAAFTLADYPDAVVEILDWPGTAVRVVSKSRQSIIDVSDIIREAWVGYDDAANGIASHDADGNRQSALSPSAIITERGYEMSLIFRNNAISDEYPEGIFHAHPEYWPVKQEPIGLIEAQGLFILPGRLVDQLGIVEEALAEGRDLPDEVSEFSLEWGELAETLAGNHDREAIRQAVHDELGSVCYRILGNTAVFKQKATTQTFLESLGFAAR.

The protein belongs to the galactose-1-phosphate uridylyltransferase type 2 family.

The protein localises to the cytoplasm. It carries out the reaction alpha-D-galactose 1-phosphate + UDP-alpha-D-glucose = alpha-D-glucose 1-phosphate + UDP-alpha-D-galactose. It functions in the pathway carbohydrate metabolism; galactose metabolism. Transfers the UMP unit from UDP-glucose (UDP-Glc) to Gal1P. Can also transfer the UMP unit to GlcNAc1P and GalNAc1P. Involved in the general galactose metabolism, and also involved in the lacto-N-biose I/galacto-N-biose (LNB/GNB) degradation pathway, which is important for host intestinal colonization by bifidobacteria. The polypeptide is Galactose-1-phosphate uridylyltransferase (Bifidobacterium longum subsp. longum (strain ATCC 15707 / DSM 20219 / JCM 1217 / NCTC 11818 / E194b)).